The primary structure comprises 152 residues: Xanthine-guanine phosphoribosyltransferase (152 aa).

5-phospho-alpha-D-ribose 1-diphosphate is bound by residues 37 to 38, Arg-69, and 88 to 96; these read RG and DDLVDTGGT. Arg-69 is a binding site for GMP. Asp-89 is a binding site for Mg(2+). Guanine contacts are provided by Asp-92 and Ile-135. Xanthine-binding residues include Asp-92 and Ile-135. Residues 92–96 and 134–135 contribute to the GMP site; these read DTGGT and WI.

This sequence belongs to the purine/pyrimidine phosphoribosyltransferase family. XGPT subfamily. In terms of assembly, homotetramer. Mg(2+) is required as a cofactor.

It is found in the cell inner membrane. It carries out the reaction GMP + diphosphate = guanine + 5-phospho-alpha-D-ribose 1-diphosphate. The enzyme catalyses XMP + diphosphate = xanthine + 5-phospho-alpha-D-ribose 1-diphosphate. It catalyses the reaction IMP + diphosphate = hypoxanthine + 5-phospho-alpha-D-ribose 1-diphosphate. It participates in purine metabolism; GMP biosynthesis via salvage pathway; GMP from guanine: step 1/1. Its pathway is purine metabolism; XMP biosynthesis via salvage pathway; XMP from xanthine: step 1/1. Its function is as follows. Purine salvage pathway enzyme that catalyzes the transfer of the ribosyl-5-phosphate group from 5-phospho-alpha-D-ribose 1-diphosphate (PRPP) to the N9 position of the 6-oxopurines guanine and xanthine to form the corresponding ribonucleotides GMP (guanosine 5'-monophosphate) and XMP (xanthosine 5'-monophosphate), with the release of PPi. To a lesser extent, also acts on hypoxanthine. The polypeptide is Xanthine-guanine phosphoribosyltransferase (Escherichia coli O127:H6 (strain E2348/69 / EPEC)).